A 1571-amino-acid chain; its full sequence is Disco-interacting protein 2 homolog A (1571 aa).

The DMAP1-binding domain maps to 9-127; it reads EAAPLPAEVR…KRRSVLVHSS (119 aa). The segment at 60-203 is disordered; it reads LQAENRIPGP…APSAAATPGA (144 aa). Residues 86–98 show a composition bias toward basic and acidic residues; the sequence is ASRDERFRSDVHT. Ser94 is subject to Phosphoserine. Polar residues-rich tracts occupy residues 127-139 and 152-162; these read SVET…TSSA and LTSTPLQSHSS. Residues Thr132 and Thr155 each carry the phosphothreonine modification. Over residues 174–203 the composition is skewed to low complexity; sequence SSTSSSASSTSSHPGGRPTTAPSAAATPGA. 2 short sequence motifs (PXXP motif; required for interaction with CTTN) span residues 283 to 286 and 307 to 310; these read PKRP and PNQP. Residues 302-327 are disordered; it reads VQQPDPNQPKPEGSETSVLRGEPLTA.

This sequence belongs to the DIP2 family. In terms of assembly, interacts with FSTL1; DIP2A may act as a cell surface receptor for FSTL1. Interacts (via N-terminus) with CTTN (via SH3 domain); the interaction promotes acetylation of CTTN and is required for proper synaptic transmission. Interacts with SHANK3. In terms of tissue distribution, low expression in all tissues tested.

Its subcellular location is the cell membrane. It localises to the mitochondrion. It is found in the cell projection. The protein resides in the dendritic spine. The catalysed reaction is acetate + ATP + CoA = acetyl-CoA + AMP + diphosphate. Its function is as follows. Catalyzes the de novo synthesis of acetyl-CoA in vitro. Promotes acetylation of CTTN, possibly by providing the acetyl donor, ensuring correct dendritic spine morphology and synaptic transmission. Binds to follistatin-related protein FSTL1 and may act as a cell surface receptor for FSTL1, contributing to AKT activation and subsequent FSTL1-induced survival and function of endothelial cells and cardiac myocytes. This Homo sapiens (Human) protein is Disco-interacting protein 2 homolog A (DIP2A).